A 434-amino-acid polypeptide reads, in one-letter code: Histidinol dehydrogenase (434 aa).

NAD(+)-binding residues include Y130, Q188, and N211. 3 residues coordinate substrate: S237, Q259, and H262. 2 residues coordinate Zn(2+): Q259 and H262. Active-site proton acceptor residues include E326 and H327. Substrate contacts are provided by H327, D360, E414, and H419. D360 is a binding site for Zn(2+). H419 contributes to the Zn(2+) binding site.

It belongs to the histidinol dehydrogenase family. In terms of assembly, homodimer. Zn(2+) serves as cofactor.

It carries out the reaction L-histidinol + 2 NAD(+) + H2O = L-histidine + 2 NADH + 3 H(+). It functions in the pathway amino-acid biosynthesis; L-histidine biosynthesis; L-histidine from 5-phospho-alpha-D-ribose 1-diphosphate: step 9/9. Functionally, catalyzes the sequential NAD-dependent oxidations of L-histidinol to L-histidinaldehyde and then to L-histidine. This is Histidinol dehydrogenase from Shigella dysenteriae serotype 1 (strain Sd197).